The chain runs to 138 residues: Basic phospholipase A2 homolog Tpu-K49a (138 aa).

Positions 1 to 16 (MRTLWIMAVLLVGVEG) are cleaved as a signal peptide. Disulfide bonds link C42–C131, C44–C60, C59–C111, C65–C138, C66–C104, and C91–C102. Residues 121–133 (KKERINTKIFCKK) form an important for membrane-damaging activities in eukaryotes and bacteria; heparin-binding region.

As to quaternary structure, monomer. As to expression, expressed by the venom gland.

Its subcellular location is the secreted. Functionally, snake venom phospholipase A2 homolog that lacks catalytic activity. Induces local edema a few hours after injection in the hind foot. Is myotoxic. A model of myotoxic mechanism has been proposed: an apo Lys49-PLA2 is activated by the entrance of a hydrophobic molecule (e.g. fatty acid) at the hydrophobic channel of the protein leading to a reorientation of a monomer. This reorientation causes a transition between 'inactive' to 'active' states, causing alignment of C-terminal and membrane-docking sites (MDoS) side-by-side and putting the membrane-disruption sites (MDiS) in the same plane, exposed to solvent and in a symmetric position for both monomers. The MDoS region stabilizes the toxin on membrane by the interaction of charged residues with phospholipid head groups. Subsequently, the MDiS region destabilizes the membrane with penetration of hydrophobic residues. This insertion causes a disorganization of the membrane, allowing an uncontrolled influx of ions (i.e. calcium and sodium), and eventually triggering irreversible intracellular alterations and cell death. The sequence is that of Basic phospholipase A2 homolog Tpu-K49a from Craspedocephalus puniceus (Flat-nosed pitviper).